The primary structure comprises 383 residues: MTVTAPKGSTGGGCRRGSKESGQPDLALVVNEGPRRAAAGVFTANRVKAAPVLWSQQVLRGGEVSAVVLNSGGANACTGPKGFQDTHATAERAAAALGHSAAEIAVASTGLIGTYLPMDRLLPGIDKAAAELSPHGGERAAIAIRTTDTVHKTAVRAGEGWSVGGMAKGAGMLAPGLATLLVVLTTDADLAPPVLDKAVRDAVRTTFERVDSDGCMSTNDTVLLLASGASGGDPGYEEFADVLREVCEDLARKLIGDAEGASKDIRIEVIHAATEDDAVEVGRTIARNNLLKCAIHGEDPNWGRVLSAIGTTKAVFEPERLNVAINGVWVCREGSAGDGRDLVDMRFREVRITADLDAGTHSAVIWANDLTAEYVHENSAYSS.

The interval 1-25 (MTVTAPKGSTGGGCRRGSKESGQPD) is disordered. Residues Thr146, Lys168, Thr179, Glu259, Asn378, and Ser383 each contribute to the substrate site. Thr179 serves as the catalytic Nucleophile.

This sequence belongs to the ArgJ family. Heterotetramer of two alpha and two beta chains.

It is found in the cytoplasm. It carries out the reaction N(2)-acetyl-L-ornithine + L-glutamate = N-acetyl-L-glutamate + L-ornithine. It catalyses the reaction L-glutamate + acetyl-CoA = N-acetyl-L-glutamate + CoA + H(+). It participates in amino-acid biosynthesis; L-arginine biosynthesis; L-ornithine and N-acetyl-L-glutamate from L-glutamate and N(2)-acetyl-L-ornithine (cyclic): step 1/1. Its pathway is amino-acid biosynthesis; L-arginine biosynthesis; N(2)-acetyl-L-ornithine from L-glutamate: step 1/4. Functionally, catalyzes two activities which are involved in the cyclic version of arginine biosynthesis: the synthesis of N-acetylglutamate from glutamate and acetyl-CoA as the acetyl donor, and of ornithine by transacetylation between N(2)-acetylornithine and glutamate. This Streptomyces clavuligerus protein is Arginine biosynthesis bifunctional protein ArgJ 1.